The sequence spans 461 residues: tRNA (guanine(10)-N(2))-methyltransferase TRMT11 (461 aa).

It belongs to the class I-like SAM-binding methyltransferase superfamily. TRM11 methyltransferase family. As to quaternary structure, part of the heterodimeric TRMT11-TRM112 methyltransferase complex; this complex forms an active tRNA methyltransferase, where TRMT112 acts as an activator of the catalytic subunit TRMT11.

The protein resides in the cytoplasm. The enzyme catalyses guanosine(10) in tRNA + S-adenosyl-L-methionine = N(2)-methylguanosine(10) in tRNA + S-adenosyl-L-homocysteine + H(+). In terms of biological role, catalytic subunit of the TRMT11-TRM112 methyltransferase complex, that specifically mediates the S-adenosyl-L-methionine-dependent N(2)-methylation of guanosine nucleotide at position 10 (m2G10) in tRNAs. This is one of the major tRNA (guanine-N(2))-methyltransferases. The sequence is that of tRNA (guanine(10)-N(2))-methyltransferase TRMT11 from Gallus gallus (Chicken).